The following is a 123-amino-acid chain: Large ribosomal subunit protein uL29y (123 aa).

Belongs to the universal ribosomal protein uL29 family.

The chain is Large ribosomal subunit protein uL29y (RPL35B) from Arabidopsis thaliana (Mouse-ear cress).